Reading from the N-terminus, the 109-residue chain is Large ribosomal subunit protein uL22 (109 aa).

It belongs to the universal ribosomal protein uL22 family. As to quaternary structure, part of the 50S ribosomal subunit.

Functionally, this protein binds specifically to 23S rRNA; its binding is stimulated by other ribosomal proteins, e.g. L4, L17, and L20. It is important during the early stages of 50S assembly. It makes multiple contacts with different domains of the 23S rRNA in the assembled 50S subunit and ribosome. Its function is as follows. The globular domain of the protein is located near the polypeptide exit tunnel on the outside of the subunit, while an extended beta-hairpin is found that lines the wall of the exit tunnel in the center of the 70S ribosome. The sequence is that of Large ribosomal subunit protein uL22 from Chromobacterium violaceum (strain ATCC 12472 / DSM 30191 / JCM 1249 / CCUG 213 / NBRC 12614 / NCIMB 9131 / NCTC 9757 / MK).